Here is a 252-residue protein sequence, read N- to C-terminus: Ribosomal RNA small subunit methyltransferase J (252 aa).

S-adenosyl-L-methionine-binding positions include 101 to 102 (RD), 117 to 118 (ER), 153 to 154 (SS), and aspartate 171.

It belongs to the methyltransferase superfamily. RsmJ family.

The protein localises to the cytoplasm. It catalyses the reaction guanosine(1516) in 16S rRNA + S-adenosyl-L-methionine = N(2)-methylguanosine(1516) in 16S rRNA + S-adenosyl-L-homocysteine + H(+). Specifically methylates the guanosine in position 1516 of 16S rRNA. The protein is Ribosomal RNA small subunit methyltransferase J of Salmonella paratyphi B (strain ATCC BAA-1250 / SPB7).